Reading from the N-terminus, the 461-residue chain is Metacaspase-1 (461 aa).

Composition is skewed to gly residues over residues 1–21, 45–66, 74–86, and 105–119; these read MSYPGQGGNTYGGGPPGGYGG, QYGGGYGGPGGGYGGSGGGYGP, QYGGSGGPGGYGP, and PGGQGGGGGGYGHPG. Residues 1–154 are disordered; sequence MSYPGQGGNT…PQGNQAFGGT (154 aa). 2 stretches are compositionally biased toward low complexity: residues 121 to 131 and 138 to 148; these read GNQAPPGQYGQ and HGNHNMPPQGN. Catalysis depends on residues histidine 252 and cysteine 308.

It belongs to the peptidase C14B family.

Involved in cell death (apoptosis). This Yarrowia lipolytica (strain CLIB 122 / E 150) (Yeast) protein is Metacaspase-1 (MCA1).